The chain runs to 222 residues: UPF0502 protein XCV4380 (222 aa).

The protein belongs to the UPF0502 family.

The protein is UPF0502 protein XCV4380 of Xanthomonas euvesicatoria pv. vesicatoria (strain 85-10) (Xanthomonas campestris pv. vesicatoria).